Reading from the N-terminus, the 85-residue chain is Cytochrome b (85 aa).

The next 3 membrane-spanning stretches (helical) occupy residues 1 to 8, 32 to 53, and 68 to 85; these read LTGLFLAM, WLIR…YLHI, and WNVG…AFVG. Positions 38 and 52 each coordinate heme b.

Belongs to the cytochrome b family. As to quaternary structure, the cytochrome bc1 complex contains 3 respiratory subunits (MT-CYB, CYC1 and UQCRFS1), 2 core proteins (UQCRC1 and UQCRC2) and probably 6 low-molecular weight proteins. Heme b is required as a cofactor.

It localises to the mitochondrion inner membrane. Its function is as follows. Component of the ubiquinol-cytochrome c reductase complex (complex III or cytochrome b-c1 complex) that is part of the mitochondrial respiratory chain. The b-c1 complex mediates electron transfer from ubiquinol to cytochrome c. Contributes to the generation of a proton gradient across the mitochondrial membrane that is then used for ATP synthesis. The sequence is that of Cytochrome b (mt-cyb) from Pomoxis nigromaculatus (Black crappie).